A 364-amino-acid chain; its full sequence is MPYQYPALTPEQKKELSDIAHRIVAPGKGILAADESTGSIAKRLQSIGTENTEENRRFYRQLLLTADDRVNPCIGGVILFHETLYQKADDGRPFPQVIKSKGGVVGIKVDKGVVPLAGTNGETTTQGLDGLSERCAQYKKDGADFAKWRCVLKIGEHTPSALAIMENANVLARYASICQQNGIVPIVEPEILPDGDHDLKRCQYVTEKVLAAVYKALSDHHIYLEGTLLKPNMVTPGHACTQKFSHEEIVMATVTALRRTVPPAVTGITFLSGGQSEEEASINLNAINKCPLLKPWALTFSYGRALQASALKAWGGKKENLKAAQEEYVKRALANSLACQGKYTPSGQAGAAASESLFVSNHAY.

Residue Tyr5 is modified to Phosphotyrosine. Phosphothreonine is present on Thr9. 2 positions are modified to phosphoserine: Ser36 and Ser39. Lys42 is modified (N6-acetyllysine; alternate). Residue Lys42 forms a Glycyl lysine isopeptide (Lys-Gly) (interchain with G-Cter in SUMO1); alternate linkage. Residue Lys42 forms a Glycyl lysine isopeptide (Lys-Gly) (interchain with G-Cter in SUMO2); alternate linkage. Beta-D-fructose 1,6-bisphosphate is bound at residue Arg43. Phosphoserine is present on Ser46. Lys99 bears the N6-(2-hydroxyisobutyryl)lysine mark. Lys108 carries the N6-acetyllysine modification. Lys111 bears the N6-acetyllysine; alternate mark. The residue at position 111 (Lys111) is an N6-malonyllysine; alternate. Ser132 carries the post-translational modification Phosphoserine. Lys147 bears the N6-(2-hydroxyisobutyryl)lysine mark. Glu188 serves as the catalytic Proton acceptor. Lys230 functions as the Schiff-base intermediate with dihydroxyacetone-P in the catalytic mechanism. Ser272 carries the post-translational modification Phosphoserine. Beta-D-fructose 1,6-bisphosphate contacts are provided by residues 272-274 (SGG), Ser301, and Arg304. The residue at position 312 (Lys312) is an N6-malonyllysine. Lys330 is modified (N6-acetyllysine).

This sequence belongs to the class I fructose-bisphosphate aldolase family. Homotetramer. Interacts with SNX9 and WAS. Interacts with FBP2; the interaction blocks FBP2 inhibition by physiological concentrations of AMP and reduces inhibition by Ca(2+).

It localises to the cytoplasm. It is found in the myofibril. The protein resides in the sarcomere. Its subcellular location is the i band. The protein localises to the m line. It carries out the reaction beta-D-fructose 1,6-bisphosphate = D-glyceraldehyde 3-phosphate + dihydroxyacetone phosphate. The protein operates within carbohydrate degradation; glycolysis; D-glyceraldehyde 3-phosphate and glycerone phosphate from D-glucose: step 4/4. Catalyzes the reversible conversion of beta-D-fructose 1,6-bisphosphate (FBP) into two triose phosphate and plays a key role in glycolysis and gluconeogenesis. In addition, may also function as scaffolding protein. The sequence is that of Fructose-bisphosphate aldolase A (ALDOA) from Pongo abelii (Sumatran orangutan).